The chain runs to 194 residues: Outer surface 22 kDa lipoprotein (194 aa).

An N-terminal signal peptide occupies residues Met-1–Ala-21. Cys-22 carries N-palmitoyl cysteine lipidation. Cys-22 carries S-diacylglycerol cysteine lipidation.

It is found in the cell outer membrane. The chain is Outer surface 22 kDa lipoprotein (p22) from Borreliella burgdorferi (strain N40) (Borrelia burgdorferi).